The chain runs to 261 residues: Cytochrome c oxidase subunit 3 (261 aa).

At 1–15 (MTHQTHAYHMVNPSP) the chain is on the mitochondrial matrix side. Residues 16–34 (WPLTGALSALLMTSGLTMW) form a helical membrane-spanning segment. Residues 35–40 (FHFNSM) lie on the Mitochondrial intermembrane side of the membrane. A helical membrane pass occupies residues 41–66 (TLLTLGLTTNMLTMYQWWRDIIREST). The Mitochondrial matrix portion of the chain corresponds to 67 to 72 (FQGHHT). Residues 73-105 (PNVQKGLRYGMILFIISEVLFFTGFFWAFYHSS) form a helical membrane-spanning segment. Topologically, residues 106–128 (LAPTPELGGCWPPTGIHPLNPLE) are mitochondrial intermembrane. A helical transmembrane segment spans residues 129–152 (VPLLNTSVLLASGVSITWAHHSLM). At 153-155 (EGN) the chain is on the mitochondrial matrix side. The helical transmembrane segment at 156 to 183 (RNHMLQALFITISLGVYFTLLQASEYYE) threads the bilayer. At 184 to 190 (APFTISD) the chain is on the mitochondrial intermembrane side. The helical transmembrane segment at 191-223 (GVYGSTFFVATGFHGLHVIIGSTFLIVCFFRQL) threads the bilayer. Topologically, residues 224–232 (KFHFTSNHH) are mitochondrial matrix. The chain crosses the membrane as a helical span at residues 233 to 256 (FGFEAAAWYWHFVDVVWLFLYVSI). Topologically, residues 257-261 (YWWGS) are mitochondrial intermembrane.

It belongs to the cytochrome c oxidase subunit 3 family. Component of the cytochrome c oxidase (complex IV, CIV), a multisubunit enzyme composed of 14 subunits. The complex is composed of a catalytic core of 3 subunits MT-CO1, MT-CO2 and MT-CO3, encoded in the mitochondrial DNA, and 11 supernumerary subunits COX4I, COX5A, COX5B, COX6A, COX6B, COX6C, COX7A, COX7B, COX7C, COX8 and NDUFA4, which are encoded in the nuclear genome. The complex exists as a monomer or a dimer and forms supercomplexes (SCs) in the inner mitochondrial membrane with NADH-ubiquinone oxidoreductase (complex I, CI) and ubiquinol-cytochrome c oxidoreductase (cytochrome b-c1 complex, complex III, CIII), resulting in different assemblies (supercomplex SCI(1)III(2)IV(1) and megacomplex MCI(2)III(2)IV(2)).

It localises to the mitochondrion inner membrane. The catalysed reaction is 4 Fe(II)-[cytochrome c] + O2 + 8 H(+)(in) = 4 Fe(III)-[cytochrome c] + 2 H2O + 4 H(+)(out). In terms of biological role, component of the cytochrome c oxidase, the last enzyme in the mitochondrial electron transport chain which drives oxidative phosphorylation. The respiratory chain contains 3 multisubunit complexes succinate dehydrogenase (complex II, CII), ubiquinol-cytochrome c oxidoreductase (cytochrome b-c1 complex, complex III, CIII) and cytochrome c oxidase (complex IV, CIV), that cooperate to transfer electrons derived from NADH and succinate to molecular oxygen, creating an electrochemical gradient over the inner membrane that drives transmembrane transport and the ATP synthase. Cytochrome c oxidase is the component of the respiratory chain that catalyzes the reduction of oxygen to water. Electrons originating from reduced cytochrome c in the intermembrane space (IMS) are transferred via the dinuclear copper A center (CU(A)) of subunit 2 and heme A of subunit 1 to the active site in subunit 1, a binuclear center (BNC) formed by heme A3 and copper B (CU(B)). The BNC reduces molecular oxygen to 2 water molecules using 4 electrons from cytochrome c in the IMS and 4 protons from the mitochondrial matrix. This is Cytochrome c oxidase subunit 3 (MT-CO3) from Antidorcas marsupialis (Springbok).